The following is a 225-amino-acid chain: LexA repressor (225 aa).

Positions 26 to 46 (YEEMKDSLNLKSKSGIHRLIS) form a DNA-binding region, H-T-H motif. Active-site for autocatalytic cleavage activity residues include S146 and K184.

This sequence belongs to the peptidase S24 family. Homodimer.

It catalyses the reaction Hydrolysis of Ala-|-Gly bond in repressor LexA.. Functionally, represses a number of genes involved in the response to DNA damage (SOS response), including recA and lexA. In the presence of single-stranded DNA, RecA interacts with LexA causing an autocatalytic cleavage which disrupts the DNA-binding part of LexA, leading to derepression of the SOS regulon and eventually DNA repair. This is LexA repressor from Pelagibacter ubique (strain HTCC1062).